A 92-amino-acid chain; its full sequence is MTTRGAVIQAAHYAETEARLQRDHIIVTMSVEMNRALPAEKASWVHEDGSPRFHFMQAANREYSRRGGKGGGHIGAVANALLANLKILEGDE.

This is Gene 80 protein (80) from Mycobacterium phage L5 (Mycobacteriophage L5).